The chain runs to 413 residues: MSTETTKPSITTTPTTVLVSPNTLKRKKGEDTSEEQLEAEIKRVALKDADSHSDNDHDSPDNVPSDVHLRMLCLVKHASLIVGHKGATISRIKSETSARINISNNIRGVPERIVYVRGTCDDVAKAYGMIVRALLEEHGNEDNGEDIEISINLLIPHHLMGCIIGKRGSRLREIEDLSAAKLFASPNQLLLSNDRILTINGVPDAIHIATFYISQTLLNFQMESPQKNVKRSIYYQPTQFNSVLIDHSQPNTIFHQRNHQYHPSDKLLSYKPNKNLPISSTLLSMATPQYTTASVANATAFQPNFVIPNVTVLDGPVISPAPGNHLLMNFVQQEIFIDEKFVGNVIGKDGKHINSVKESTGCSIIIQDPVEGSSERRLTIRGTFMASQAAIMLISNKIEIDRSNAERKRRSPL.

Positions 1–23 (MSTETTKPSITTTPTTVLVSPNT) are enriched in low complexity. Residues 1–36 (MSTETTKPSITTTPTTVLVSPNTLKRKKGEDTSEEQ) form a disordered region. KH domains are found at residues 66 to 130 (DVHL…YGMI), 148 to 213 (EISI…TFYI), and 330 to 394 (FVQQ…IMLI).

In terms of assembly, interacts with PAB1.

The protein localises to the nucleus. The polypeptide is PAB1-binding protein 2 (PBP2) (Saccharomyces cerevisiae (strain ATCC 204508 / S288c) (Baker's yeast)).